The following is a 597-amino-acid chain: Gamma-terpinene synthase, chloroplastic (597 aa).

A chloroplast-targeting transit peptide spans 1 to 47 (MATLSMQVSILNKQLKNLNSFGMRASKLPLVARRVDVSTTRLRPICS). The Mn(2+) site is built by Asp350 and Asp354. Positions 350–354 (DDVYD) match the DDXXD motif motif. Homodimerization stretches follow at residues 356 to 362 (YGTLDEL) and 428 to 464 (EAKW…YFTL). Residues Asp494 and Glu502 each contribute to the Mn(2+) site.

Belongs to the terpene synthase family. Homodimer. The cofactor is Mn(2+). It depends on Mg(2+) as a cofactor.

It is found in the plastid. It localises to the chloroplast. It catalyses the reaction (2E)-geranyl diphosphate = gamma-terpinene + diphosphate. The protein operates within secondary metabolite biosynthesis; terpenoid biosynthesis. Its function is as follows. Involved in the biosynthesis of phenolic monoterpenes natural products thymol and carvacrol which have a broad range of biological activities acting as antimicrobial compounds, insecticides, antioxidants and pharmaceutical agents. Monoterpene synthase which catalyzes the conversion of geranyl diphosphate (GPP) to gamma-terpinene and minor amounts of other monoterpenes (e.g. alpha-thujene, alpha-terpinene, myrcene, sabinene, (+)-R-limonene, alpha-pinene and alpha-phellandrene). In Thymus caespititius (Cretan thyme), this protein is Gamma-terpinene synthase, chloroplastic.